The chain runs to 129 residues: MADITKDQVVEFISNMTVLELSEFITELEEKFGVSAAAPVAAVAAMPGAAGGEAAGGEEQTEFDVILKSAGGNKIAVIKAVRALTGLGLKEAKAKVDEAPAAIKEGVEKAEAEEALKQLEEAGAEAEMK.

It belongs to the bacterial ribosomal protein bL12 family. Homodimer. Part of the ribosomal stalk of the 50S ribosomal subunit. Forms a multimeric L10(L12)X complex, where L10 forms an elongated spine to which 2 to 4 L12 dimers bind in a sequential fashion. Binds GTP-bound translation factors.

Forms part of the ribosomal stalk which helps the ribosome interact with GTP-bound translation factors. Is thus essential for accurate translation. This Maridesulfovibrio salexigens (strain ATCC 14822 / DSM 2638 / NCIMB 8403 / VKM B-1763) (Desulfovibrio salexigens) protein is Large ribosomal subunit protein bL12.